A 689-amino-acid polypeptide reads, in one-letter code: DNA-directed RNA polymerase subunit beta' (689 aa).

Zn(2+) is bound by residues Cys-69, Cys-71, Cys-87, and Cys-90. Asp-489, Asp-491, and Asp-493 together coordinate Mg(2+).

This sequence belongs to the RNA polymerase beta' chain family. RpoC1 subfamily. As to quaternary structure, in plastids the minimal PEP RNA polymerase catalytic core is composed of four subunits: alpha, beta, beta', and beta''. When a (nuclear-encoded) sigma factor is associated with the core the holoenzyme is formed, which can initiate transcription. It depends on Mg(2+) as a cofactor. Zn(2+) is required as a cofactor.

It is found in the plastid. The protein resides in the chloroplast. The enzyme catalyses RNA(n) + a ribonucleoside 5'-triphosphate = RNA(n+1) + diphosphate. DNA-dependent RNA polymerase catalyzes the transcription of DNA into RNA using the four ribonucleoside triphosphates as substrates. The sequence is that of DNA-directed RNA polymerase subunit beta' from Helianthus annuus (Common sunflower).